Here is a 230-residue protein sequence, read N- to C-terminus: Triggering receptor expressed on myeloid cells 1 (230 aa).

Residues 1-20 (MRKAGLWGLLCVFFVSEVKA) form the signal peptide. In terms of domain architecture, Ig-like V-type spans 21–124 (AIVLEEERYD…IYHPPNDPVV (104 aa)). Residues 21 to 202 (AIVLEEERYD…TDADSVSTSS (182 aa)) are Extracellular-facing. Cysteines 41 and 113 form a disulfide. The N-linked (GlcNAc...) asparagine glycan is linked to Asn191. The chain crosses the membrane as a helical span at residues 203-223 (VTISVICGLLSKSLVFIILFI). Topologically, residues 224–230 (VTKRTFG) are cytoplasmic.

Monomer. Homomultimer; when activated. Interacts with TYROBP/DAP12. Interacts with TLR4.

It localises to the cell membrane. Cell surface receptor that plays important roles in innate and adaptive immunity by amplifying inflammatory responses. Upon activation by various ligands such as PGLYRP1, HMGB1 or HSP70, multimerizes and forms a complex with transmembrane adapter TYROBP/DAP12. In turn, initiates a SYK-mediated cascade of tyrosine phosphorylation, activating multiple downstream mediators such as BTK, MAPK1, MAPK3 or phospholipase C-gamma. This cascade promotes the neutrophil- and macrophage-mediated release of pro-inflammatory cytokines and/or chemokines, as well as their migration and thereby amplifies inflammatory responses that are triggered by bacterial and fungal infections. By also promoting the amplification of inflammatory signals that are initially triggered by Toll-like receptor (TLR) and NOD-like receptor engagement, plays a major role in the pathophysiology of acute and chronic inflammatory diseases of different etiologies including septic shock and atherosclerosis. The chain is Triggering receptor expressed on myeloid cells 1 (Trem1) from Mus musculus (Mouse).